Reading from the N-terminus, the 348-residue chain is UPF0283 membrane protein HAPS_0079 (348 aa).

Transmembrane regions (helical) follow at residues 57–77 (FLAA…QWLI), 86–106 (IYFA…GAII), and 203–223 (ENAI…MVAW).

Belongs to the UPF0283 family.

It is found in the cell inner membrane. This chain is UPF0283 membrane protein HAPS_0079, found in Glaesserella parasuis serovar 5 (strain SH0165) (Haemophilus parasuis).